Reading from the N-terminus, the 67-residue chain is Large ribosomal subunit protein bL35 (67 aa).

This sequence belongs to the bacterial ribosomal protein bL35 family.

In Brachyspira hyodysenteriae (strain ATCC 49526 / WA1), this protein is Large ribosomal subunit protein bL35.